Consider the following 140-residue polypeptide: Probable deoxyuridine 5'-triphosphate nucleotidohydrolase (140 aa).

Substrate-binding positions include 62-64, 76-79, Arg-130, and 135-136; these read RSG, GVID, and FG.

This sequence belongs to the dUTPase family. Homotrimer. The cofactor is Mg(2+).

The enzyme catalyses dUTP + H2O = dUMP + diphosphate + H(+). It functions in the pathway pyrimidine metabolism; dUMP biosynthesis; dUMP from dCTP (dUTP route): step 2/2. Its function is as follows. This enzyme is involved in nucleotide metabolism: it produces dUMP, the immediate precursor of thymidine nucleotides and it decreases the intracellular concentration of dUTP so that uracil cannot be incorporated into DNA. In Schizosaccharomyces pombe (strain 972 / ATCC 24843) (Fission yeast), this protein is Probable deoxyuridine 5'-triphosphate nucleotidohydrolase.